The chain runs to 339 residues: Phosphate acyltransferase (339 aa).

It belongs to the PlsX family. In terms of assembly, homodimer. Probably interacts with PlsY.

It is found in the cytoplasm. The catalysed reaction is a fatty acyl-[ACP] + phosphate = an acyl phosphate + holo-[ACP]. It participates in lipid metabolism; phospholipid metabolism. In terms of biological role, catalyzes the reversible formation of acyl-phosphate (acyl-PO(4)) from acyl-[acyl-carrier-protein] (acyl-ACP). This enzyme utilizes acyl-ACP as fatty acyl donor, but not acyl-CoA. This Helicobacter pylori (strain Shi470) protein is Phosphate acyltransferase.